A 378-amino-acid chain; its full sequence is Peptide methionine sulfoxide reductase MsrA/MsrB (378 aa).

The interval 40 to 197 is peptide methionine sulfoxide reductase A; the sequence is QQATLAGGCF…KVRYNYYRYA (158 aa). Residue cysteine 48 is part of the active site. Residues 240-362 enclose the MsrB domain; the sequence is DEQIRAKLTS…NSAAMRFIPK (123 aa). Cysteine 351 functions as the Nucleophile in the catalytic mechanism.

The protein in the N-terminal section; belongs to the MsrA Met sulfoxide reductase family. It in the C-terminal section; belongs to the MsrB Met sulfoxide reductase family.

It carries out the reaction L-methionyl-[protein] + [thioredoxin]-disulfide + H2O = L-methionyl-(S)-S-oxide-[protein] + [thioredoxin]-dithiol. It catalyses the reaction [thioredoxin]-disulfide + L-methionine + H2O = L-methionine (S)-S-oxide + [thioredoxin]-dithiol. The enzyme catalyses L-methionyl-[protein] + [thioredoxin]-disulfide + H2O = L-methionyl-(R)-S-oxide-[protein] + [thioredoxin]-dithiol. Functionally, has an important function as a repair enzyme for proteins that have been inactivated by oxidation. Catalyzes the reversible oxidation-reduction of methionine sulfoxide in proteins to methionine. This chain is Peptide methionine sulfoxide reductase MsrA/MsrB (msrAB), found in Vibrio cholerae serotype O1 (strain ATCC 39315 / El Tor Inaba N16961).